The primary structure comprises 140 residues: Anti-sigma F factor (140 aa).

This sequence belongs to the anti-sigma-factor family.

It catalyses the reaction L-seryl-[protein] + ATP = O-phospho-L-seryl-[protein] + ADP + H(+). The enzyme catalyses L-threonyl-[protein] + ATP = O-phospho-L-threonyl-[protein] + ADP + H(+). Binds to sigma F and blocks its ability to form an RNA polymerase holoenzyme (E-sigma F). Phosphorylates SpoIIAA on a serine residue. This phosphorylation may enable SpoIIAA to act as an anti-anti-sigma factor that counteracts SpoIIAB and thus releases sigma F from inhibition. The sequence is that of Anti-sigma F factor from Clostridium perfringens (strain ATCC 13124 / DSM 756 / JCM 1290 / NCIMB 6125 / NCTC 8237 / Type A).